A 532-amino-acid chain; its full sequence is Nectin-4 (532 aa).

The first 30 residues, 1–30, serve as a signal peptide directing secretion; the sequence is MGPLHGALLPPISVTVSLLILLLCAPGGRC. The Ig-like V-type domain maps to 31 to 142; sequence GVVHTEKSMT…GNFDAELELK (112 aa). Residues 31–344 lie on the Extracellular side of the membrane; the sequence is GVVHTEKSMT…TKIDLVSVSL (314 aa). 3 cysteine pairs are disulfide-bonded: cysteine 51/cysteine 125, cysteine 169/cysteine 221, and cysteine 266/cysteine 312. Ig-like C2-type domains follow at residues 146 to 235 and 244 to 328; these read PPLP…KRIT and AEVS…AIVS. A disordered region spans residues 152–179; sequence GPGPPLTEGEGKSLAASCTAEGNPAPTL. Asparagine 189 and asparagine 282 each carry an N-linked (GlcNAc...) asparagine glycan. A helical transmembrane segment spans residues 345 to 365; it reads GSVGILTAVLLVVLVITLLLV. Topologically, residues 366-532 are cytoplasmic; it reads NRHHKRQTKQ…IYINGRGHLV (167 aa). The segment at 453–491 is disordered; the sequence is QTELLSTVPDEEVKEDGEEPEQVEQSLEKEPNPTEPDGM. A compositionally biased stretch (acidic residues) spans 461-474; the sequence is PDEEVKEDGEEPEQ.

This sequence belongs to the nectin family.

It localises to the cell membrane. Its function is as follows. May be involved in cell adhesion. The sequence is that of Nectin-4 from Xenopus tropicalis (Western clawed frog).